The sequence spans 235 residues: RAD9, HUS1, RAD1-interacting nuclear orphan protein 1 (235 aa).

Ser-50 carries the phosphoserine modification. The RAD1-binding motif signature appears at 54–60 (SWVLPQF). Residues 66 to 106 (SRFPTHRKHHRDQARHPTRRSTCKFPRLTFESPESSSSETL) are disordered. Basic residues predominate over residues 69 to 87 (PTHRKHHRDQARHPTRRST). Over residues 96 to 106 (ESPESSSSETL) the composition is skewed to low complexity. Positions 123 to 130 (RRPLVPLF) match the D-box motif. The interval 156-198 (QTPGSSVREDPISPDQKENSLPSCILGPRTPRTPEPGPVLVKD) is disordered. Residues 162-173 (VREDPISPDQKE) are compositionally biased toward basic and acidic residues. Residues 171 to 175 (QKENS) carry the KEN box motif.

Interacts (when phosphorylated by PLK1) with POLQ; promoting POLQ recruitment to DNA damage sites. Interacts with RAD1; interaction is direct and promotes association with the 9-1-1 (RAD9-RAD1-HUS1) complex. Interacts with RAD18. Interacts with TOPBP1. Interacts with UBE2N. Post-translationally, phosphorylated at Ser-50 by PLK1, promoting interaction with polymerase theta (POLQ). Ubiquitinated and degraded by the APC/C complex upon mitotic exit.

It is found in the nucleus. It localises to the chromosome. Its function is as follows. Involved in microhomology-mediated end-joining (MMEJ) DNA repair by promoting recruitment of polymerase theta (POLQ) to DNA damage sites during mitosis. MMEJ is an alternative non-homologous end-joining (NHEJ) machinery that takes place during mitosis to repair double-strand breaks in DNA that originate in S-phase. Accumulates in M-phase; following phosphorylation by PLK1, interacts with POLQ, enabling its recruitment to double-strand breaks for subsequent repair. Also involved in the DNA damage response (DDR) signaling in response to genotoxic stresses such as ionizing radiation (IR) during the S phase. Recruited to sites of DNA damage through interaction with the 9-1-1 cell-cycle checkpoint response complex and TOPBP1 in a ATR-dependent manner. Required for the progression of the G1 to S phase transition. Plays a role in the stimulation of CHEK1 phosphorylation. This is RAD9, HUS1, RAD1-interacting nuclear orphan protein 1 (Rhno1) from Rattus norvegicus (Rat).